The following is a 623-amino-acid chain: MTLNKKTNNENSSKTTPKLSKKTDFQNDFASKNYVFNPQDKVFQIAQVFGITSAVLIKKLLQLGLKADVNQTLEKDIVELLAKEYNIKVIEPQKEQTPPQLQPQKPPLTKSKLQAKPNQKLNLQKTPPIVTIMGHVDHGKTTLLDAIRKTRVVDQEFGGITQHIGAYQVEYQGNKITFIDTPGHEAFDKMRARGAKITDICILVVAVDDCVKPQTLEALKHAQKAQIPIIVALNKVDKPNNKTQQIMQELSSYDLLPEEWGGTTPYIAISALKREGLEKILEIILLFSEIQNLQTNPDQKAKGTVIEASLDKSLGPVATFIISDGNLKVGDIVVAGTSYGKIRSMEDENKKTPTKALPSQPVRVSGLKEVPQAGDIFYAVSNEKQARQIVSEKKTKTKETLAKPPSPLNLEDILQDLETEKPQELNIILKADTQGSLEALQGMIDKIKVSDLKVQLLRAAVGTITEKDIAFAKSSDSLLIGFNIKPAFSTLKSAQIQEVKITIHNVIYRIIEDIEQKLKSMIKPTFEEVVTGKVEVRKIFNISKVGNIAGCYVTQGIVNNSDFAKVMRNDEVLFKGKITSLKHLKDNIKSAKQGHECGILLDGFNDFEINDIIETSKLSKVEE.

Residues 1–18 (MTLNKKTNNENSSKTTPK) are compositionally biased toward low complexity. 2 disordered regions span residues 1-21 (MTLN…KLSK) and 92-115 (PQKE…KLQA). The tr-type G domain maps to 125–293 (KTPPIVTIMG…ILLFSEIQNL (169 aa)). Residues 134–141 (GHVDHGKT) form a G1 region. 134-141 (GHVDHGKT) contributes to the GTP binding site. Residues 159–163 (GITQH) form a G2 region. A G3 region spans residues 180–183 (DTPG). GTP contacts are provided by residues 180–184 (DTPGH) and 234–237 (NKVD). The tract at residues 234–237 (NKVD) is G4. The tract at residues 270 to 272 (SAL) is G5.

This sequence belongs to the TRAFAC class translation factor GTPase superfamily. Classic translation factor GTPase family. IF-2 subfamily.

The protein resides in the cytoplasm. One of the essential components for the initiation of protein synthesis. Protects formylmethionyl-tRNA from spontaneous hydrolysis and promotes its binding to the 30S ribosomal subunits. Also involved in the hydrolysis of GTP during the formation of the 70S ribosomal complex. This Aster yellows witches'-broom phytoplasma (strain AYWB) protein is Translation initiation factor IF-2.